Consider the following 373-residue polypeptide: Hydrogenase maturation factor HypD (373 aa).

Fe cation-binding residues include Cys41, Cys69, and Cys72.

This sequence belongs to the HypD family. As to quaternary structure, monomer. Interacts with HypC. Forms a complex with HypC, or HybG, and HypE. Requires [4Fe-4S] cluster as cofactor.

The protein operates within protein modification; [NiFe] hydrogenase maturation. Involved in the maturation of [NiFe] hydrogenases. Involved in the biosynthesis of the Fe(CN)(2)CO cofactor. HypD may act as a scaffold on which the Fe(CN)(2)CO cofactor is formed. In complex with HypC, accepts the cyanide ligand generated by HypF and HypE, and also coordinates the carbon monoxide ligand. Required for the formation of all three hydrogenase isoenzymes. This is Hydrogenase maturation factor HypD from Escherichia coli (strain K12).